The chain runs to 499 residues: MEEFQVYLELDRSRQHDFLYPLIFREYIYALAYDHGLNSSILVQNXGYDNKSSLLIVKRLITRMYQQNHLIISANDSNKNPFWGYNKNLYSQIISEGLAVSVEIPFSLQLISSLEKAEIIKSYNLRSIHSIFPFFEEKFPYLNYVSDVQIPYPIHLEILIQSLRYWVKDASSFHLLRLFLYEYCNWNSLITPKKRISTFSKRNPXFXLXLYNFYVCEYXSIFLFLRNKSSYLRLTSSGVLFERIYFYAKIXHFVKVFDKDFLSTLWFFKDPFIHYVRYQGKSILASKNTPFLMKKWKYYLIHLWQCHFFVWSQPGKIHINQLSEHSFYFLGYFSNVRINPSVVRSQMLEKSFIMENLMKKLDTIIPIIPLIRSLAKAKFCNILGHPISKPVWADSSDFDIIDRFLQICRNLSHYYNGSSKKKSLYRIKYILRLSCIKTLARKHKSTVRVFLKRLGSELLEEFFTEEEDIFSLIFSRASSTLQKLYRGRIWYLDIFDFHQ.

Belongs to the intron maturase 2 family. MatK subfamily.

The protein resides in the plastid. It is found in the chloroplast. In terms of biological role, usually encoded in the trnK tRNA gene intron. Probably assists in splicing its own and other chloroplast group II introns. In Neltuma juliflora (Mesquite), this protein is Maturase K.